A 180-amino-acid chain; its full sequence is Cuticle protein 3 (180 aa).

An N-terminal signal peptide occupies residues 1–16 (MMKLIVLAAFIGVCAG). In terms of domain architecture, Chitin-binding type R&amp;R spans 58–121 (EQGFRYAYET…PQGAHFPTPP (64 aa)).

The polypeptide is Cuticle protein 3 (Lonomia obliqua (Moth)).